We begin with the raw amino-acid sequence, 95 residues long: Aspartyl/glutamyl-tRNA(Asn/Gln) amidotransferase subunit C (95 aa).

Belongs to the GatC family. In terms of assembly, heterotrimer of A, B and C subunits.

The enzyme catalyses L-glutamyl-tRNA(Gln) + L-glutamine + ATP + H2O = L-glutaminyl-tRNA(Gln) + L-glutamate + ADP + phosphate + H(+). It catalyses the reaction L-aspartyl-tRNA(Asn) + L-glutamine + ATP + H2O = L-asparaginyl-tRNA(Asn) + L-glutamate + ADP + phosphate + 2 H(+). Its function is as follows. Allows the formation of correctly charged Asn-tRNA(Asn) or Gln-tRNA(Gln) through the transamidation of misacylated Asp-tRNA(Asn) or Glu-tRNA(Gln) in organisms which lack either or both of asparaginyl-tRNA or glutaminyl-tRNA synthetases. The reaction takes place in the presence of glutamine and ATP through an activated phospho-Asp-tRNA(Asn) or phospho-Glu-tRNA(Gln). This chain is Aspartyl/glutamyl-tRNA(Asn/Gln) amidotransferase subunit C, found in Phenylobacterium zucineum (strain HLK1).